Reading from the N-terminus, the 1951-residue chain is [F-actin]-monooxygenase MICAL2 (1951 aa).

The monooxygenase domain stretch occupies residues 2–494 (GENEDEKQAQ…KHLYITKEMD (493 aa)). FAD-binding positions include Cys-97, 116–118 (EKR), 123–125 (RNN), Phe-183, Tyr-298, and Asp-398. The Calponin-homology (CH) domain maps to 516–619 (DIRPNKLLTW…MVMYLSKFYE (104 aa)). Position 631 is a phosphoserine (Ser-631). The short motif at 660 to 681 (RKRTPRVDTQTEENDMNKRRRQ) is the Nuclear localization signal element. 2 disordered regions span residues 663 to 712 (TPRV…SQNK) and 891 to 921 (KRVP…AADS). Over residues 691–700 (SFSSRSLGSS) the composition is skewed to low complexity. Positions 896–909 (AHPPSPPSCLPSPH) are enriched in pro residues. Residues 910-921 (PAAASSPPAADS) show a composition bias toward low complexity. Residues 991-1053 (DTCYFCKKRV…KPHFVHCKTS (63 aa)) enclose the LIM zinc-binding domain. Zn(2+)-binding residues include Cys-993, Cys-996, His-1014, Cys-1017, Cys-1020, Cys-1023, Cys-1043, and His-1046. Position 1052 is a phosphoserine (Thr-1052). 10 disordered regions span residues 1054-1141 (SKQR…RISP), 1158-1314 (TSED…VSPT), 1348-1368 (VEPG…EGCQ), 1383-1427 (ILGK…RKLG), 1451-1476 (HKTG…TCSS), 1489-1580 (QKKA…AKKA), 1594-1624 (AQAS…STTP), 1678-1697 (GDFF…VPSL), 1706-1731 (STSM…GEGG), and 1747-1766 (PVTE…EADS). Over residues 1061–1070 (AELNQQREEE) the composition is skewed to basic and acidic residues. Polar residues-rich tracts occupy residues 1129-1138 (PRPSEWTSVR), 1228-1239 (HSLQSPTPSKYQ), and 1246-1256 (QSNSTPMNQRA). The segment covering 1257 to 1268 (PSPPKEPPPPPS) has biased composition (pro residues). Residues 1269-1285 (LSSSSSLPSSFSSASVP) show a composition bias toward low complexity. Residues 1291-1306 (DSSSPQVTYNLHSPQI) show a composition bias toward polar residues. The segment at 1314–1353 (TPIYLRRARAQGIVKEIPLYLPHSPMLESTEDCLVEPGRE) is interaction with MAPK1. The segment covering 1350 to 1359 (PGRESLRSPE) has biased composition (basic and acidic residues). Over residues 1532 to 1545 (EAGKKTSPKPESKT) the composition is skewed to basic and acidic residues. Over residues 1599–1616 (LSLPNSILRSRSLPSRPS) the composition is skewed to low complexity. Over residues 1678–1688 (GDFFNSPKEEG) the composition is skewed to basic and acidic residues. At Ser-1683 the chain carries Phosphoserine. Residues 1706–1720 (STSMGQVAHPSSTGQ) show a composition bias toward polar residues. Over residues 1749-1759 (TEATSSPTSSS) the composition is skewed to low complexity. The bMERB domain maps to 1789–1939 (KQEELKRLHK…ERTQDQHFEN (151 aa)).

This sequence belongs to the Mical family. In terms of assembly, interacts with PLXNA4. Interacts with RAB1B. Interacts with MAPK1/ERK2. Interacts with RAB1B, RAB35, RAB8A, RAB10, RAB13 and RAB15 (in their GTP-bound forms); binding to RAB1B and RAB35 is of low affinity compared to other Rab proteins; binding to RAB1B and RAB35 is of low affinity compared to other Rab proteins; at least in case of RAB8A may bind 2 molecules of RAB8A simultaneously through a high and a low affinity binding site, respectively. FAD serves as cofactor. In terms of tissue distribution, expressed only in testis (at protein level).

The protein resides in the cytoplasm. Its subcellular location is the nucleus. The catalysed reaction is L-methionyl-[F-actin] + NADPH + O2 + H(+) = L-methionyl-(R)-S-oxide-[F-actin] + NADP(+) + H2O. In terms of biological role, methionine monooxygenase that promotes depolymerization of F-actin by mediating oxidation of residues 'Met-44' and 'Met-47' on actin to form methionine-sulfoxide, resulting in actin filament disassembly and preventing repolymerization. Regulates the disassembly of branched actin networks also by oxidizing ARP3B-containing ARP2/3 complexes leading to ARP3B dissociation from the network. Acts as a key regulator of the SRF signaling pathway elicited by nerve growth factor and serum: mediates oxidation and subsequent depolymerization of nuclear actin, leading to increase MKL1/MRTF-A presence in the nucleus and promote SRF:MKL1/MRTF-A-dependent gene transcription. Does not activate SRF:MKL1/MRTF-A through RhoA. The polypeptide is [F-actin]-monooxygenase MICAL2 (Mus musculus (Mouse)).